The primary structure comprises 219 residues: RING-H2 finger protein ATL78 (219 aa).

The chain crosses the membrane as a helical span at residues 57–77 (VMVLSVLLCALVCSLGLNSII). An RING-type; atypical zinc finger spans residues 131-173 (CAICLSEFVAEERVKLLPTCHHGFHVRCIDKWLSSHSSCPTCR).

It belongs to the RING-type zinc finger family. ATL subfamily.

It localises to the membrane. It catalyses the reaction S-ubiquitinyl-[E2 ubiquitin-conjugating enzyme]-L-cysteine + [acceptor protein]-L-lysine = [E2 ubiquitin-conjugating enzyme]-L-cysteine + N(6)-ubiquitinyl-[acceptor protein]-L-lysine.. It functions in the pathway protein modification; protein ubiquitination. The sequence is that of RING-H2 finger protein ATL78 (ATL78) from Arabidopsis thaliana (Mouse-ear cress).